The chain runs to 332 residues: Formamidase (332 aa).

The CN hydrolase domain maps to 14 to 259 (FLTALIQYPV…WEIVTAEVYP (246 aa)). E60 functions as the Proton acceptor in the catalytic mechanism. K132 (proton donor) is an active-site residue. C165 acts as the Nucleophile in catalysis.

This sequence belongs to the carbon-nitrogen hydrolase superfamily. Aliphatic amidase family.

The enzyme catalyses formamide + H2O = formate + NH4(+). In terms of biological role, is an aliphatic amidase with a restricted substrate specificity, as it only hydrolyzes formamide. This Bacillus cereus (strain G9842) protein is Formamidase.